A 545-amino-acid chain; its full sequence is Glucose-6-phosphate isomerase (545 aa).

Residue glutamate 353 is the Proton donor of the active site. Active-site residues include histidine 384 and lysine 510.

This sequence belongs to the GPI family.

The protein resides in the cytoplasm. The enzyme catalyses alpha-D-glucose 6-phosphate = beta-D-fructose 6-phosphate. The protein operates within carbohydrate biosynthesis; gluconeogenesis. It participates in carbohydrate degradation; glycolysis; D-glyceraldehyde 3-phosphate and glycerone phosphate from D-glucose: step 2/4. Functionally, catalyzes the reversible isomerization of glucose-6-phosphate to fructose-6-phosphate. The polypeptide is Glucose-6-phosphate isomerase (Aromatoleum aromaticum (strain DSM 19018 / LMG 30748 / EbN1) (Azoarcus sp. (strain EbN1))).